Consider the following 88-residue polypeptide: MDKVYKRSWFQTFLAFLVSQLYFNFVELTGWGPKYREMNGFPANIVELDFFQTYLSFYDNPWFNIITVFLGVFTIIQIITGITKDIRN.

2 consecutive transmembrane segments (helical) span residues F13–P33 and W62–I82.

Its subcellular location is the cell membrane. This is an uncharacterized protein from Bacillus subtilis (strain 168).